We begin with the raw amino-acid sequence, 496 residues long: NADH-quinone oxidoreductase subunit N (496 aa).

13 helical membrane-spanning segments follow: residues 16–36 (SLSPMLSMMVFALFILIVGAI), 46–66 (CVFCIIAIFVNLGITLDFNGL), 79–99 (ISIISQIIILIASALFIPLAL), 116–136 (FLFMIAGFLFMVSSNNLLIIF), 166–186 (FAMGSLSAGFFAMAIAMFYLA), 208–228 (LIILLGCVFIASAIGFKLSLI), 245–267 (LAGYMSIVPKVAGFIVALRIFAM), 278–298 (DMLYIIAVLTMSLANIMALVQ), 304–324 (MLAFSSIAHAGVVLCALVANS), 331–351 (LFFYWIMFLFANLGAFSMLWV), 382–402 (AVIMGIFMIALAGIPPFSVFW), 422–442 (IIMINSAIAIYYYLKLIVFMF), and 464–484 (VIVGVAVAGTVFAFLFSGAIL).

Belongs to the complex I subunit 2 family. NDH-1 is composed of 14 different subunits. Subunits NuoA, H, J, K, L, M, N constitute the membrane sector of the complex.

The protein resides in the cell inner membrane. The catalysed reaction is a quinone + NADH + 5 H(+)(in) = a quinol + NAD(+) + 4 H(+)(out). In terms of biological role, NDH-1 shuttles electrons from NADH, via FMN and iron-sulfur (Fe-S) centers, to quinones in the respiratory chain. The immediate electron acceptor for the enzyme in this species is believed to be ubiquinone. Couples the redox reaction to proton translocation (for every two electrons transferred, four hydrogen ions are translocated across the cytoplasmic membrane), and thus conserves the redox energy in a proton gradient. The chain is NADH-quinone oxidoreductase subunit N from Campylobacter concisus (strain 13826).